The primary structure comprises 582 residues: 2-succinyl-5-enolpyruvyl-6-hydroxy-3-cyclohexene-1-carboxylate synthase (582 aa).

This sequence belongs to the TPP enzyme family. MenD subfamily. In terms of assembly, homodimer. Mg(2+) is required as a cofactor. Mn(2+) serves as cofactor. Requires thiamine diphosphate as cofactor.

The enzyme catalyses isochorismate + 2-oxoglutarate + H(+) = 5-enolpyruvoyl-6-hydroxy-2-succinyl-cyclohex-3-ene-1-carboxylate + CO2. It participates in quinol/quinone metabolism; 1,4-dihydroxy-2-naphthoate biosynthesis; 1,4-dihydroxy-2-naphthoate from chorismate: step 2/7. It functions in the pathway cofactor biosynthesis; phylloquinone biosynthesis. Functionally, catalyzes the thiamine diphosphate-dependent decarboxylation of 2-oxoglutarate and the subsequent addition of the resulting succinic semialdehyde-thiamine pyrophosphate anion to isochorismate to yield 2-succinyl-5-enolpyruvyl-6-hydroxy-3-cyclohexene-1-carboxylate (SEPHCHC). The protein is 2-succinyl-5-enolpyruvyl-6-hydroxy-3-cyclohexene-1-carboxylate synthase of Trichodesmium erythraeum (strain IMS101).